The following is a 172-amino-acid chain: Adenine phosphoribosyltransferase (172 aa).

It belongs to the purine/pyrimidine phosphoribosyltransferase family. In terms of assembly, homodimer.

It is found in the cytoplasm. The catalysed reaction is AMP + diphosphate = 5-phospho-alpha-D-ribose 1-diphosphate + adenine. It participates in purine metabolism; AMP biosynthesis via salvage pathway; AMP from adenine: step 1/1. Catalyzes a salvage reaction resulting in the formation of AMP, that is energically less costly than de novo synthesis. This Streptococcus thermophilus (strain ATCC BAA-250 / LMG 18311) protein is Adenine phosphoribosyltransferase.